The primary structure comprises 457 residues: tRNA modification GTPase MnmE (457 aa).

Residues R25, E87, and R126 each contribute to the (6S)-5-formyl-5,6,7,8-tetrahydrofolate site. In terms of domain architecture, TrmE-type G spans 223–377; the sequence is GISTAIIGRP…IEERINNLFF (155 aa). N233 contributes to the K(+) binding site. Residues 233-238, 252-258, and 277-280 each bind GTP; these read NVGKSS, TDIAGTT, and DTAG. Mg(2+) is bound at residue S237. K(+)-binding residues include T252, I254, and T257. T258 contributes to the Mg(2+) binding site. K457 is a (6S)-5-formyl-5,6,7,8-tetrahydrofolate binding site.

Belongs to the TRAFAC class TrmE-Era-EngA-EngB-Septin-like GTPase superfamily. TrmE GTPase family. As to quaternary structure, homodimer. Heterotetramer of two MnmE and two MnmG subunits. The cofactor is K(+).

It localises to the cytoplasm. Its function is as follows. Exhibits a very high intrinsic GTPase hydrolysis rate. Involved in the addition of a carboxymethylaminomethyl (cmnm) group at the wobble position (U34) of certain tRNAs, forming tRNA-cmnm(5)s(2)U34. The sequence is that of tRNA modification GTPase MnmE from Streptococcus pneumoniae serotype 4 (strain ATCC BAA-334 / TIGR4).